The sequence spans 390 residues: S-adenosylmethionine synthase 3 (390 aa).

E9 contacts Mg(2+). H15 is a binding site for ATP. E43 serves as a coordination point for K(+). L-methionine-binding residues include E56 and Q99. ATP-binding positions include 167–169 (DGK), 235–238 (SGRF), D246, 252–253 (RK), A269, K273, and K277. D246 provides a ligand contact to L-methionine. K277 is an L-methionine binding site.

This sequence belongs to the AdoMet synthase family. As to quaternary structure, homotetramer. Mn(2+) is required as a cofactor. The cofactor is Mg(2+). Co(2+) serves as cofactor. Requires K(+) as cofactor. It depends on NH4(+) as a cofactor. As to expression, mostly expressed in roots, and, to a lower extent, in hypocotyls and cotyledons.

Its subcellular location is the cytoplasm. It carries out the reaction L-methionine + ATP + H2O = S-adenosyl-L-methionine + phosphate + diphosphate. It participates in amino-acid biosynthesis; S-adenosyl-L-methionine biosynthesis; S-adenosyl-L-methionine from L-methionine: step 1/1. With respect to regulation, inhibited by products of SAMS reaction (SAM, Pi, PPi), substrate analogs (cycloleucine and ethionine), and alternative nucleotides (GTP, CTP and ADP). Strongly repressed by PPPi. Its function is as follows. Catalyzes the formation of S-adenosylmethionine from methionine and ATP. The reaction comprises two steps that are both catalyzed by the same enzyme: formation of S-adenosylmethionine (AdoMet) and triphosphate, and subsequent hydrolysis of the triphosphate. This is S-adenosylmethionine synthase 3 (SAMS3) from Catharanthus roseus (Madagascar periwinkle).